A 238-amino-acid polypeptide reads, in one-letter code: Ribitol-5-phosphate cytidylyltransferase 2 (238 aa).

Residues 7–10 (LAGG) and 81–87 (GTDRNET) each bind CTP.

The protein belongs to the IspD/TarI cytidylyltransferase family. TarI subfamily.

The enzyme catalyses D-ribitol 5-phosphate + CTP + H(+) = CDP-L-ribitol + diphosphate. Its pathway is cell wall biogenesis; poly(ribitol phosphate) teichoic acid biosynthesis. Functionally, catalyzes the transfer of the cytidylyl group of CTP to D-ribitol 5-phosphate. This chain is Ribitol-5-phosphate cytidylyltransferase 2, found in Staphylococcus aureus (strain MSSA476).